A 287-amino-acid polypeptide reads, in one-letter code: Large ribosomal subunit protein uL2 (287 aa).

Residues 221-287 (RGSVMNPCDH…SKRSRGGRDS (67 aa)) form a disordered region. Residues 258 to 287 (KTRKRNKPSNRYVLRKRRKTSKRSRGGRDS) are compositionally biased toward basic residues.

Belongs to the universal ribosomal protein uL2 family. As to quaternary structure, part of the 50S ribosomal subunit. Forms a bridge to the 30S subunit in the 70S ribosome.

Functionally, one of the primary rRNA binding proteins. Required for association of the 30S and 50S subunits to form the 70S ribosome, for tRNA binding and peptide bond formation. It has been suggested to have peptidyltransferase activity; this is somewhat controversial. Makes several contacts with the 16S rRNA in the 70S ribosome. In Parasynechococcus marenigrum (strain WH8102), this protein is Large ribosomal subunit protein uL2.